The sequence spans 257 residues: NAD-capped RNA hydrolase NudC (257 aa).

R69 contributes to the substrate binding site. C98 and C101 together coordinate Zn(2+). E111 lines the substrate pocket. 2 residues coordinate Zn(2+): C116 and C119. Residue Y124 participates in substrate binding. The region spanning P125–T248 is the Nudix hydrolase domain. A divalent metal cation-binding residues include A158, E174, and E178. The Nudix box motif lies at G159–G180. Q192–S199 serves as a coordination point for substrate. E219 serves as a coordination point for a divalent metal cation. Residue A241 coordinates substrate.

The protein belongs to the Nudix hydrolase family. NudC subfamily. In terms of assembly, homodimer. Requires Mg(2+) as cofactor. The cofactor is Mn(2+). It depends on Zn(2+) as a cofactor.

The catalysed reaction is a 5'-end NAD(+)-phospho-ribonucleoside in mRNA + H2O = a 5'-end phospho-adenosine-phospho-ribonucleoside in mRNA + beta-nicotinamide D-ribonucleotide + 2 H(+). It catalyses the reaction NAD(+) + H2O = beta-nicotinamide D-ribonucleotide + AMP + 2 H(+). The enzyme catalyses NADH + H2O = reduced beta-nicotinamide D-ribonucleotide + AMP + 2 H(+). MRNA decapping enzyme that specifically removes the nicotinamide adenine dinucleotide (NAD) cap from a subset of mRNAs by hydrolyzing the diphosphate linkage to produce nicotinamide mononucleotide (NMN) and 5' monophosphate mRNA. The NAD-cap is present at the 5'-end of some mRNAs and stabilizes RNA against 5'-processing. Has preference for mRNAs with a 5'-end purine. Catalyzes the hydrolysis of a broad range of dinucleotide pyrophosphates. The chain is NAD-capped RNA hydrolase NudC from Salmonella typhi.